A 61-amino-acid polypeptide reads, in one-letter code: Small ribosomal subunit protein uS14 (61 aa).

Positions 24, 27, 40, and 43 each coordinate Zn(2+).

Belongs to the universal ribosomal protein uS14 family. Zinc-binding uS14 subfamily. As to quaternary structure, part of the 30S ribosomal subunit. Contacts proteins S3 and S10. Requires Zn(2+) as cofactor.

Functionally, binds 16S rRNA, required for the assembly of 30S particles and may also be responsible for determining the conformation of the 16S rRNA at the A site. This chain is Small ribosomal subunit protein uS14, found in Nitratiruptor sp. (strain SB155-2).